A 232-amino-acid chain; its full sequence is ATP synthase subunit a (232 aa).

Transmembrane regions (helical) follow at residues Leu18–Ile38, Trp74–Phe94, Thr107–Phe127, Ala142–Leu162, Gly173–Val193, and Ser195–Ile215.

The protein belongs to the ATPase A chain family. F-type ATPases have 2 components, CF(1) - the catalytic core - and CF(0) - the membrane proton channel. CF(1) has five subunits: alpha(3), beta(3), gamma(1), delta(1), epsilon(1). CF(0) has three main subunits: a, b and c.

It is found in the mitochondrion inner membrane. In terms of biological role, mitochondrial membrane ATP synthase (F(1)F(0) ATP synthase or Complex V) produces ATP from ADP in the presence of a proton gradient across the membrane which is generated by electron transport complexes of the respiratory chain. F-type ATPases consist of two structural domains, F(1) - containing the extramembraneous catalytic core and F(0) - containing the membrane proton channel, linked together by a central stalk and a peripheral stalk. During catalysis, ATP synthesis in the catalytic domain of F(1) is coupled via a rotary mechanism of the central stalk subunits to proton translocation. Key component of the proton channel; it may play a direct role in the translocation of protons across the membrane. This chain is ATP synthase subunit a (ATP6), found in Paracentrotus lividus (Common sea urchin).